The primary structure comprises 674 residues: Ribosome biogenesis protein BOP1 homolog (674 aa).

The interval methionine 1–aspartate 28 is disordered. The segment covering lysine 15 to aspartate 28 has biased composition (basic and acidic residues). WD repeat units lie at residues glycine 342 to glutamine 384, aspartate 386 to valine 425, glutamine 427 to lysine 458, methionine 459 to proline 500, lysine 503 to lysine 541, histidine 587 to lysine 626, and proline 643 to tyrosine 674.

The protein belongs to the WD repeat BOP1/ERB1 family.

Its subcellular location is the nucleus. The protein localises to the nucleolus. It localises to the nucleoplasm. Required for maturation of ribosomal RNAs and formation of the large ribosomal subunit. The polypeptide is Ribosome biogenesis protein BOP1 homolog (Caenorhabditis elegans).